Here is a 340-residue protein sequence, read N- to C-terminus: Alpha-1,4-N-acetylglucosaminyltransferase (340 aa).

Residues 1–4 (MRKE) are Cytoplasmic-facing. Residues 5–25 (LQLSLSVTLLLVCGFLYQFTL) traverse the membrane as a helical; Signal-anchor for type II membrane protein segment. Topologically, residues 26-340 (KSSCLFCLPS…VTGELGPGNK (315 aa)) are lumenal. Residues Asn99 and Asn138 are each glycosylated (N-linked (GlcNAc...) asparagine). A DXD motif motif is present at residues 167–169 (DTD). N-linked (GlcNAc...) asparagine glycans are attached at residues Asn251 and Asn282.

Belongs to the glycosyltransferase 32 family. In terms of tissue distribution, detected in stomach and pancreas.

The protein localises to the golgi apparatus membrane. It functions in the pathway protein modification; protein glycosylation. Its function is as follows. Catalyzes the transfer of N-acetylglucosamine (GlcNAc) to core 2 branched O-glycans. Necessary for the synthesis of type III mucin which is specifically produced in the stomach, duodenum, and pancreatic duct. May protect against inflammation-associated gastric adenocarcinomas. The protein is Alpha-1,4-N-acetylglucosaminyltransferase (A4GNT) of Homo sapiens (Human).